A 164-amino-acid chain; its full sequence is Putative Cys-tRNA(Pro)/Cys-tRNA(Cys) deacylase EbsC (164 aa).

It belongs to the prolyl-tRNA editing family. YbaK/EbsC subfamily.

Affects the expression of the receptor, named binding substance, that mediates mating aggregate formation. Could be a regulatory protein that suppresses the function or expression of ebsA and/or ebsMB. In Enterococcus faecalis (strain ATCC 700802 / V583), this protein is Putative Cys-tRNA(Pro)/Cys-tRNA(Cys) deacylase EbsC.